Reading from the N-terminus, the 397-residue chain is Enoyl-[acyl-carrier-protein] reductase [NADH] (397 aa).

Residues Gly48 to Tyr53, Phe74 to Glu75, Asp111 to Ala112, and Ala139 to Ala140 each bind NAD(+). Tyr225 is a binding site for substrate. The Proton donor role is filled by Tyr235. Residues Lys244 and Val273–Thr275 each bind NAD(+).

Belongs to the TER reductase family. Monomer.

It carries out the reaction a 2,3-saturated acyl-[ACP] + NAD(+) = a (2E)-enoyl-[ACP] + NADH + H(+). Its pathway is lipid metabolism; fatty acid biosynthesis. Its function is as follows. Involved in the final reduction of the elongation cycle of fatty acid synthesis (FAS II). Catalyzes the reduction of a carbon-carbon double bond in an enoyl moiety that is covalently linked to an acyl carrier protein (ACP). The sequence is that of Enoyl-[acyl-carrier-protein] reductase [NADH] from Burkholderia pseudomallei (strain 1710b).